Reading from the N-terminus, the 532-residue chain is Metal-staphylopine-binding protein CntA (532 aa).

The signal sequence occupies residues 1-20 (MRKLTKMSAMLLASGLILTG). Residue Cys-21 is the site of N-palmitoyl cysteine attachment. A lipid anchor (S-diacylglycerol cysteine) is attached at Cys-21. The staphylopine site is built by Arg-165, Arg-418, and Asn-448.

Belongs to the bacterial solute-binding protein 5 family. As to quaternary structure, the complex is composed of two ATP-binding proteins (CntD and CntF), two transmembrane proteins (CntB and CntC) and a solute-binding protein (CntA).

Its subcellular location is the cell membrane. Its activity is regulated as follows. Nickel/cobalt import is reduced in the presence of zinc. Part of the ABC transporter complex CntABCDF (Opp1) involved in the uptake of metal in complex with the metallophore staphylopine (StP). Involved in the import of divalent metals ions such as nickel, cobalt and zinc. Binds the metal via the metallophore StP, and transfers the StP-metal complex to the membrane-bound permease. Binds one molecule of StP/metal. Binds StP/Co(2+) and StP/Ni(2+) tighter than StP/Zn(2+). Plays a major role in nickel/cobalt import in zinc-depleted conditions. Contributes to virulence. Required for full urease activity in vitro. This chain is Metal-staphylopine-binding protein CntA, found in Staphylococcus aureus (strain NCTC 8325 / PS 47).